An 856-amino-acid polypeptide reads, in one-letter code: Translation initiation factor IF-2 (856 aa).

2 disordered regions span residues 1 to 248 (MSDN…ARAR) and 254 to 273 (KRAR…QQKQ). The segment covering 22–38 (ETGQVKQSFSHGRSNTV) has biased composition (polar residues). Over residues 83–93 (APRPAPAPIPT) the composition is skewed to pro residues. The segment covering 100–150 (LERREQQERLLREAEEARMAALEETRRREERAKAEATEEERRRAEENRRAE) has biased composition (basic and acidic residues). Positions 156 to 196 (AAAAAAAAATAEAETAAAAPREEAPAAAGTAEEAPRTSSST) are enriched in low complexity. Residues 197-209 (MPPPRRFTPVPSP) are compositionally biased toward pro residues. Residues 210–229 (KRPEPPRPQQRDRKGDDRRQ) are compositionally biased toward basic and acidic residues. A tr-type G domain is found at 356-526 (PRPPVVTIMG…ELQAELLELK (171 aa)). The G1 stretch occupies residues 365-372 (GHVDHGKT). 365 to 372 (GHVDHGKT) provides a ligand contact to GTP. Positions 390-394 (GITQH) are G2. Residues 412–415 (DTPG) form a G3 region. Residues 412–416 (DTPGH) and 466–469 (NKMD) contribute to the GTP site. Residues 466–469 (NKMD) form a G4 region. The tract at residues 502–504 (SAL) is G5.

The protein belongs to the TRAFAC class translation factor GTPase superfamily. Classic translation factor GTPase family. IF-2 subfamily.

It localises to the cytoplasm. Its function is as follows. One of the essential components for the initiation of protein synthesis. Protects formylmethionyl-tRNA from spontaneous hydrolysis and promotes its binding to the 30S ribosomal subunits. Also involved in the hydrolysis of GTP during the formation of the 70S ribosomal complex. This chain is Translation initiation factor IF-2, found in Rhizorhabdus wittichii (strain DSM 6014 / CCUG 31198 / JCM 15750 / NBRC 105917 / EY 4224 / RW1) (Sphingomonas wittichii).